The primary structure comprises 351 residues: MSRAPRTARAELPKGEQARHVPVLLAEVLAALSLDRPGLAVDGTFGAGGYTRALLEAGPEVRVIAIDRDPTAIRGGADLVTASGGRLRLVQGRFGDLDTLIADQDEAQADWIVLDIGVSSMQIDEAQRGFSFRQDGPLDMRMGGEGPSAADLVNGEEETTLADILYHFGEERRSRAVARAIVEARRRAPIETTAQLADLVAGVVRPEPGSPIHPATRSFQGLRIAVNDELGELVRGLHAAERVLKPGGRLAVVTFHSLEDRIVKQFFSARSGRAAQASRHVPGVERPAPKSFKLVTKGPVLPSEAETDVNPRSRSAKLRAGERTDAPAPPPLSAIEMLASLPAPQGRGPRR.

S-adenosyl-L-methionine contacts are provided by residues 48–50 (GGY), Asp67, Phe94, Asp115, and Gln122. The disordered stretch occupies residues 274 to 351 (AAQASRHVPG…PAPQGRGPRR (78 aa)).

The protein belongs to the methyltransferase superfamily. RsmH family.

It is found in the cytoplasm. It carries out the reaction cytidine(1402) in 16S rRNA + S-adenosyl-L-methionine = N(4)-methylcytidine(1402) in 16S rRNA + S-adenosyl-L-homocysteine + H(+). Its function is as follows. Specifically methylates the N4 position of cytidine in position 1402 (C1402) of 16S rRNA. The polypeptide is Ribosomal RNA small subunit methyltransferase H (Methylorubrum extorquens (strain ATCC 14718 / DSM 1338 / JCM 2805 / NCIMB 9133 / AM1) (Methylobacterium extorquens)).